Consider the following 599-residue polypeptide: Glucose-6-phosphate 1-dehydrogenase 3, chloroplastic (599 aa).

The segment covering 1–18 (MSSLSCPTYRSRTSSSSP) has biased composition (low complexity). A disordered region spans residues 1–23 (MSSLSCPTYRSRTSSSSPFLSNH). The transit peptide at 1 to 66 (MSSLSCPTYR…RSQRRSVQSS (66 aa)) directs the protein to the chloroplast. Position 67 is an N-acetylvaline (valine 67). NADP(+) is bound by residues 119 to 126 (GASGDLAK) and arginine 153. Residues cysteine 171 and cysteine 179 are joined by a disulfide bond. Lysine 256 is an NADP(+) binding site. Residues lysine 256, 286–290 (HYLGK), glutamate 324, and aspartate 343 each bind D-glucose 6-phosphate. The active-site Proton acceptor is the histidine 348. Residue lysine 441 coordinates NADP(+). Residues lysine 444 and arginine 449 each coordinate D-glucose 6-phosphate. 2 residues coordinate NADP(+): arginine 454 and arginine 483. D-glucose 6-phosphate is bound at residue glutamine 485. Residues 491–493 (YLK) and arginine 576 contribute to the NADP(+) site.

This sequence belongs to the glucose-6-phosphate dehydrogenase family. As to quaternary structure, forms homodimer. Interacts with G6PD1. Expressed in roots, flowers and siliques.

Its subcellular location is the plastid. The protein localises to the chloroplast stroma. It carries out the reaction D-glucose 6-phosphate + NADP(+) = 6-phospho-D-glucono-1,5-lactone + NADPH + H(+). The protein operates within carbohydrate degradation; pentose phosphate pathway; D-ribulose 5-phosphate from D-glucose 6-phosphate (oxidative stage): step 1/3. Regulated by metabolites. Post-translationally inactivated by cysteine-mediated redox modification via the ferredoxin-thioredoxin system in the light and this avoids futile cycles with photosynthetic CO2 fixation. In terms of biological role, catalyzes the rate-limiting step of the oxidative pentose-phosphate pathway, which represents a route for the dissimilation of carbohydrates besides glycolysis. The main function of this enzyme is to provide reducing power (NADPH) and pentose phosphates for fatty acid and nucleic acid synthesis which are involved in membrane synthesis and cell division. This is Glucose-6-phosphate 1-dehydrogenase 3, chloroplastic from Arabidopsis thaliana (Mouse-ear cress).